We begin with the raw amino-acid sequence, 441 residues long: Chitinase-like protein Idgf3 (441 aa).

Positions 1-23 (MTGSLWLSLALSLAVLAQFKVSA) are cleaved as a signal peptide. The 417-residue stretch at 25–441 (PNLVCFYDSQ…MLRAIKYRLL (417 aa)) folds into the GH18 domain. Cysteines 29 and 56 form a disulfide. Asn-221 carries N-linked (GlcNAc...) asparagine glycosylation. Residues 307 to 331 (KDSGDSGMPVVPSTQGPAPAGPQSK) form a disordered region. A disulfide bond links Cys-342 and Cys-425.

Belongs to the glycosyl hydrolase 18 family. IDGF subfamily. Post-translationally, glycosylated. Primarily expressed in yolk cells and fat body. In larvae, it is expressed in small and large salivary gland cells, and weakly expressed in imaginal disks. Less expressed than Idgf2 and Idgf4.

The protein localises to the secreted. Its function is as follows. Cooperates with insulin-like peptides to stimulate the proliferation, polarization and motility of imaginal disk cells. May act by stabilizing the binding of insulin-like peptides to its receptor through a simultaneous interaction with both molecules to form a multiprotein signaling complex. This is Chitinase-like protein Idgf3 (Idgf3) from Drosophila melanogaster (Fruit fly).